A 530-amino-acid chain; its full sequence is Probable basic-leucine zipper transcription factor L (530 aa).

Low complexity-rich tracts occupy residues 1–17 (MYSP…SPES) and 24–39 (SINN…ANQS). Positions 1–76 (MYSPSSPQSS…QSAALSRSRK (76 aa)) are disordered. The bZIP domain occupies 55-118 (VKKRQVRLLK…FETKSRLEFL (64 aa)). The segment at 56 to 77 (KKRQVRLLKNRQSAALSRSRKK) is basic motif. A leucine-zipper region spans residues 83-104 (LESKAQELTHSTQELHVQYNKI). Disordered regions lie at residues 142–177 (NNIK…TTPV), 216–258 (SQNK…SPTP), and 389–481 (HHHH…SQIN). Low complexity-rich tracts occupy residues 149-176 (RSNS…STTP) and 220-247 (NNNN…NTTN). Positions 248-257 (LLDQQQQSPT) are enriched in polar residues. The span at 436-478 (SSSPSSSSTSSPSTSSPSTPKSMGFPSPIFIGSSGSGPSSSGS) shows a compositional bias: low complexity.

Belongs to the bZIP family.

The protein localises to the nucleus. Its function is as follows. Probable transcriptional regulator. The protein is Probable basic-leucine zipper transcription factor L (bzpL) of Dictyostelium discoideum (Social amoeba).